The following is a 115-amino-acid chain: Large ribosomal subunit protein bL19 (115 aa).

It belongs to the bacterial ribosomal protein bL19 family.

This protein is located at the 30S-50S ribosomal subunit interface and may play a role in the structure and function of the aminoacyl-tRNA binding site. This chain is Large ribosomal subunit protein bL19, found in Finegoldia magna (strain ATCC 29328 / DSM 20472 / WAL 2508) (Peptostreptococcus magnus).